A 254-amino-acid chain; its full sequence is Low affinity immunoglobulin gamma Fc region receptor III-A (254 aa).

The N-terminal stretch at 1–20 (MWQLLLPTALLLLVSAGMRA) is a signal peptide. At 21 to 206 (EDLPKAVVFL…SSISSFFPPG (186 aa)) the chain is on the extracellular side. 2 consecutive Ig-like C2-type domains span residues 24 to 105 (PKAV…LEVH) and 107 to 189 (GWLL…VNIT). 2 cysteine pairs are disulfide-bonded: C47–C89 and C128–C172. N-linked (GlcNAc...) asparagine glycosylation is present at N187. The helical transmembrane segment at 207-229 (YQVSFCLVMVLLFAVDTGLYFSV) threads the bilayer. The Cytoplasmic segment spans residues 230 to 254 (KKSVPSSTRDWEDHKFKWSKDPQDK).

As to quaternary structure, forms a heterooligomeric complex with ITAM-containing signaling subunits, either a homodimer of CD247, a homodimer of FCER1G or a heterodimer of CD247 and FCER1G, to form a functional receptor complex. Interacts (via transmembrane domain) with signaling subunits; this interaction is a prerequisite for receptor complex expression on the cell surface and intracellular signal transduction. Binds the Fc region of antigen-complexed IgG with a preference for IgG1 and IgG3 isotypes. Interacts with CD2; this interaction is involved in NK cell activation and cytotoxicity. Interacts with S100A4; this interaction inhibits PKC-dependent phosphorylation of FCGR3A. Glycosylated. Glycosylation plays an inhibitory role in the interaction with IgG1 and IgG2. Post-translationally, undergoes rapid ectodomain shedding upon NK cell stimulation. The soluble form is produced by a proteolytic cleavage mediated by ADAM17. Repeated stimulation causes receptor shedding, a mechanism that allows for increased NK cell motility and detachment from opsonized target cells while avoiding activation-induced NK cell apoptosis. Lymphocytes and monocytes.

The protein localises to the cell membrane. It is found in the secreted. In terms of biological role, receptor for the invariable Fc fragment of immunoglobulin gamma (IgG). Optimally activated upon binding of clustered antigen-IgG complexes displayed on cell surfaces, triggers lysis of antibody-coated cells, a process known as antibody-dependent cellular cytotoxicity (ADCC). Does not bind free monomeric IgG, thus avoiding inappropriate effector cell activation in the absence of antigenic trigger. Mediates IgG effector functions on natural killer (NK) cells. Binds antigen-IgG complexes generated upon infection and triggers NK cell-dependent cytokine production and degranulation to limit viral load and propagation. Involved in the generation of memory-like adaptive NK cells capable to produce high amounts of IFNG and to efficiently eliminate virus-infected cells via ADCC. Regulates NK cell survival and proliferation, in particular by preventing NK cell progenitor apoptosis. Fc-binding subunit that associates with CD247 and/or FCER1G adapters to form functional signaling complexes. Following the engagement of antigen-IgG complexes, triggers phosphorylation of immunoreceptor tyrosine-based activation motif (ITAM)-containing adapters with subsequent activation of phosphatidylinositol 3-kinase signaling and sustained elevation of intracellular calcium that ultimately drive NK cell activation. The ITAM-dependent signaling coupled to receptor phosphorylation by PKC mediates robust intracellular calcium flux that leads to production of pro-inflammatory cytokines, whereas in the absence of receptor phosphorylation it mainly activates phosphatidylinositol 3-kinase signaling leading to cell degranulation. Costimulates NK cells and trigger lysis of target cells independently of IgG binding. Mediates the antitumor activities of therapeutic antibodies. Upon ligation on monocytes triggers TNFA-dependent ADCC of IgG-coated tumor cells. Mediates enhanced ADCC in response to afucosylated IgGs. This Macaca mulatta (Rhesus macaque) protein is Low affinity immunoglobulin gamma Fc region receptor III-A.